The chain runs to 1634 residues: Leucine-rich repeat-containing protein 37A3 (1634 aa).

Positions 1 to 35 are cleaved as a signal peptide; sequence MTSAQCPALACVMSPLRFWGPWPLLMWQLLWLLVK. The Extracellular segment spans residues 36-1581; the sequence is EAQPLEWVKD…ELPGYGYTKK (1546 aa). 5 disordered regions span residues 53–104, 129–154, 172–531, 619–642, and 758–777; these read PLGP…ESTE, SQQDLKDKLSPQERLPVSPKKLKKDP, TPQS…VVVA, PEPTTEVGHSTPPKRTIVSPKHPE, and EPTTETGHSTALEKTTAPRP. An LRR 1 repeat occupies 137–160; the sequence is LSPQERLPVSPKKLKKDPAQRWSL. Composition is skewed to polar residues over residues 172–189 and 223–237; these read TPQSQKQTLQNEYSSTDT and ETQNPETLEDIQSSS. LRR repeat units follow at residues 230–253 and 267–290; these read LEDIQSSSLQQEAPAQLPQLLEEE and ESSMESLTLPNHEVSVQPPGEDQA. Residues 238–249 show a composition bias toward low complexity; sequence LQQEAPAQLPQL. Asn296 is a glycosylation site (N-linked (GlcNAc...) asparagine). Residues 307-326 show a composition bias toward polar residues; it reads TITSEPTNETESSQAQQETP. Residues 358–368 show a composition bias toward low complexity; sequence SEQQQPVQPSE. Residues 433 to 446 show a composition bias toward polar residues; the sequence is LVHQEATTRLSGSG. Over residues 482–493 the composition is skewed to low complexity; that stretch reads SPEPINNENPSP. A compositionally biased stretch (polar residues) spans 760–770; the sequence is TTETGHSTALE. LRR repeat units lie at residues 864 to 887, 888 to 911, 912 to 935, 937 to 959, 963 to 987, and 1002 to 1027; these read NGTFTILNFQGNYISYIDGNVWKA, YSWTEKLILRENNLTELHKDSFEG, LLSLQYLDLSCNKIQSIERHTFEP, PFLKFINLSCNVITELSFGTFQA, MQFLHKLILNHNPLTTVEDPYLFKL, and LTTLKNILMMTVELEKLIVPSHMACC. The N-linked (GlcNAc...) asparagine glycan is linked to Asn1079. LRR repeat units lie at residues 1124–1146 and 1151–1176; these read LPYFSAVNLDVKSLLLPFIKLPT and LAKIQTVGKNRQRLNRVLMGPRSIQK. Composition is skewed to basic and acidic residues over residues 1181–1191 and 1201–1216; these read EVGRQSIRREQ and AEEKRLGSPAPRELKQ. Disordered regions lie at residues 1181 to 1227 and 1306 to 1329; these read EVGR…EKLA and RFHKTRSRMTHRTPKVKKSPKVRK. The stretch at 1359-1384 is one LRR 12 repeat; the sequence is FSSLRDLSPQENPFLEVSAPSEHFIE. Residues 1582 to 1602 form a helical membrane-spanning segment; the sequence is LILALIVTGILTILIILLCLI. Over 1603-1634 the chain is Cytoplasmic; sequence EICCHRRSLQEDEEGFSRDSEAPTEEESEALP. Residues 1614-1634 form a disordered region; that stretch reads DEEGFSRDSEAPTEEESEALP. The segment covering 1624–1634 has biased composition (acidic residues); it reads APTEEESEALP.

Belongs to the LRRC37A family.

The protein resides in the membrane. The protein is Leucine-rich repeat-containing protein 37A3 (LRRC37A3) of Homo sapiens (Human).